The primary structure comprises 407 residues: Biflaviolin synthase CYP158A1 (407 aa).

A compositionally biased stretch (polar residues) spans 1-11 (MTQETTTLTGQ). The segment at 1 to 20 (MTQETTTLTGQSPPPVRDWP) is disordered. Flaviolin is bound by residues Arg92, Tyr199, and 290 to 291 (HR). Residue Cys356 participates in heme binding.

Belongs to the cytochrome P450 family. It depends on heme as a cofactor.

The enzyme catalyses 2 flaviolin + 2 reduced [2Fe-2S]-[ferredoxin] + O2 + H(+) = 3,3'-biflaviolin + 2 oxidized [2Fe-2S]-[ferredoxin] + 2 H2O. It catalyses the reaction 2 flaviolin + 2 reduced [2Fe-2S]-[ferredoxin] + O2 + H(+) = 3,8'-biflaviolin + 2 oxidized [2Fe-2S]-[ferredoxin] + 2 H2O. Its pathway is pigment biosynthesis. Functionally, catalyzes oxidative C-C coupling reaction to polymerize flaviolin and form highly conjugated pigments which protect the soil bacterium from deleterious effects of UV irradiation (two isomers of biflaviolin and one triflaviolin). This is Biflaviolin synthase CYP158A1 from Streptomyces coelicolor (strain ATCC BAA-471 / A3(2) / M145).